The primary structure comprises 98 residues: DNA-binding protein Fis (98 aa).

Positions 74–93 (QTRAALMMGINRGTLRKKLK) form a DNA-binding region, H-T-H motif.

This sequence belongs to the transcriptional regulatory Fis family. Homodimer.

Functionally, activates ribosomal RNA transcription. Plays a direct role in upstream activation of rRNA promoters. The sequence is that of DNA-binding protein Fis from Photorhabdus laumondii subsp. laumondii (strain DSM 15139 / CIP 105565 / TT01) (Photorhabdus luminescens subsp. laumondii).